The primary structure comprises 208 residues: LysM and putative peptidoglycan-binding domain-containing protein 2 (208 aa).

Positions 1-54 (MAEFSPVLPPLRDDGGGGRYGQPLFPRSRSGSESDSELSQSLARTKTRSYGSTA) are disordered. Residues 27 to 42 (RSRSGSESDSELSQSL) show a composition bias toward low complexity. A LysM domain is found at 65 to 109 (IEHRVTDGETLQGIALKYGVTMEQIKRVNKLFSNDCIFLRNTLSI). 2 disordered regions span residues 122 to 169 (LSLE…EELS) and 187 to 208 (AARK…YQEI). A compositionally biased stretch (polar residues) spans 129-140 (SEGNTPQESPCV). Over residues 147–156 (PSPPPEPSVP) the composition is skewed to pro residues.

This chain is LysM and putative peptidoglycan-binding domain-containing protein 2 (lysmd2), found in Danio rerio (Zebrafish).